A 617-amino-acid chain; its full sequence is Proline--tRNA ligase (617 aa).

The protein belongs to the class-II aminoacyl-tRNA synthetase family. ProS type 1 subfamily. As to quaternary structure, homodimer.

Its subcellular location is the cytoplasm. The catalysed reaction is tRNA(Pro) + L-proline + ATP = L-prolyl-tRNA(Pro) + AMP + diphosphate. In terms of biological role, catalyzes the attachment of proline to tRNA(Pro) in a two-step reaction: proline is first activated by ATP to form Pro-AMP and then transferred to the acceptor end of tRNA(Pro). As ProRS can inadvertently accommodate and process non-cognate amino acids such as alanine and cysteine, to avoid such errors it has two additional distinct editing activities against alanine. One activity is designated as 'pretransfer' editing and involves the tRNA(Pro)-independent hydrolysis of activated Ala-AMP. The other activity is designated 'posttransfer' editing and involves deacylation of mischarged Ala-tRNA(Pro). The misacylated Cys-tRNA(Pro) is not edited by ProRS. The sequence is that of Proline--tRNA ligase from Streptococcus pneumoniae serotype 4 (strain ATCC BAA-334 / TIGR4).